A 326-amino-acid polypeptide reads, in one-letter code: N-acetyl-gamma-glutamyl-phosphate reductase (326 aa).

Cys155 is a catalytic residue.

Belongs to the NAGSA dehydrogenase family. Type 1 subfamily.

It is found in the cytoplasm. The enzyme catalyses N-acetyl-L-glutamate 5-semialdehyde + phosphate + NADP(+) = N-acetyl-L-glutamyl 5-phosphate + NADPH + H(+). Its pathway is amino-acid biosynthesis; L-arginine biosynthesis; N(2)-acetyl-L-ornithine from L-glutamate: step 3/4. In terms of biological role, catalyzes the NADPH-dependent reduction of N-acetyl-5-glutamyl phosphate to yield N-acetyl-L-glutamate 5-semialdehyde. This is N-acetyl-gamma-glutamyl-phosphate reductase from Shewanella baltica (strain OS223).